Reading from the N-terminus, the 283-residue chain is Cuticle collagen 49 (283 aa).

The first 19 residues, 1–19, serve as a signal peptide directing secretion; it reads MWKFVIGSVSTAAFFVSVC. Residues 90–283 are disordered; the sequence is EPTKNCPAGP…GYCTCPPRTA (194 aa). Basic and acidic residues predominate over residues 127–139; it reads VVIHDMPNPKECI. A compositionally biased stretch (pro residues) spans 143 to 155; it reads AGPPGPPGPPGPL. Residues 185-204 show a composition bias toward low complexity; that stretch reads QGPPGSAGRAGPRGQAGQPG. In terms of domain architecture, Collagen-like spans 213 to 271; sequence GRPGPQGPLGEPGAQGEPGVDGKDGALGAPGRKAENGRPGKRGKDGVAGVPGTRGKEGE. Positions 244-257 are enriched in basic and acidic residues; it reads RKAENGRPGKRGKD.

The protein belongs to the cuticular collagen family. As to quaternary structure, collagen polypeptide chains are complexed within the cuticle by disulfide bonds and other types of covalent cross-links.

Probable cuticular collagen-like protein. Nematode cuticles are composed largely of collagen-like proteins. The cuticle functions both as an exoskeleton and as a barrier to protect the worm from its environment. Acts downstream of the Wnt signaling pathway, perhaps in the formation of the adult cuticle. The protein is Cuticle collagen 49 of Caenorhabditis elegans.